The primary structure comprises 130 residues: Large ribosomal subunit protein bL20 (130 aa).

The protein belongs to the bacterial ribosomal protein bL20 family.

Binds directly to 23S ribosomal RNA and is necessary for the in vitro assembly process of the 50S ribosomal subunit. It is not involved in the protein synthesizing functions of that subunit. This chain is Large ribosomal subunit protein bL20, found in Leifsonia xyli subsp. xyli (strain CTCB07).